The chain runs to 968 residues: Pumilio homolog 1 (968 aa).

Disordered regions lie at residues 1 to 25 (MIPELGRRPMHRGNEDSSFGDDYEK) and 138 to 171 (NNVLGGVGDRRKVNDNRSLFSMPPGFEGEKTGAS). At Ser-194 the chain carries Phosphoserine. Disordered stretches follow at residues 204–240 (GHGHPVAQQPSRPASRNTFDENVDSNNNLSPSASQGI), 260–303 (GTPD…VTSG), and 360–382 (KSDQAHKATGSLRNSQLRGPHGS). Polar residues-rich tracts occupy residues 211–220 (QQPSRPASRN) and 227–238 (DSNNNLSPSASQ). A Phosphothreonine modification is found at Thr-261. The span at 291 to 303 (TSNQSPFNGVTSG) shows a compositional bias: polar residues. The PUM-HD domain occupies 610 to 950 (FGSSMLEEFK…HVVARIEKLV (341 aa)). 8 Pumilio repeats span residues 630-665 (EIAGHVVEFSSDQYGSRFIQQKLETATTDEKNMVYE), 666-701 (EIMPQALVLMTDVFGNYVIQKFFEHGLPPQRRELAE), 702-737 (KLFDHVLPLSLQMYGCRVIQKAIEVVDLDQKIKMVK), 738-773 (ELDGHVMRCVRDQNGNHVVQKCIECVPEENIEFIIS), 774-810 (TFFGHVVTLSTHPYGCRVIQRVLEHCHDPDTQSKVME), 811-846 (EILSTVSMLAQDQYGNYVVQHVLEHGKPDERTVIIK), 847-882 (ELAGKIVQMSQQKFASNVVEKCLTFGGPEERELLVN), and 883-924 (EMLG…LILT).

The protein localises to the cytoplasm. Functionally, sequence-specific RNA-binding protein that regulates translation and mRNA stability by binding the 3'-UTR of target mRNAs. Binds the APUM-binding elements (APBEs) in the 3'-UTR mRNA sequence of CLV1, PNH, WUS and FAS2. This is Pumilio homolog 1 (APUM1) from Arabidopsis thaliana (Mouse-ear cress).